A 358-amino-acid chain; its full sequence is 3-isopropylmalate dehydrogenase (358 aa).

Residues R92, R102, R130, and D224 each contribute to the substrate site. Mg(2+) contacts are provided by D224, D248, and D252. 282 to 294 (GSAPDIAGQGIAN) contacts NAD(+).

The protein belongs to the isocitrate and isopropylmalate dehydrogenases family. LeuB type 1 subfamily. As to quaternary structure, homodimer. It depends on Mg(2+) as a cofactor. Mn(2+) serves as cofactor.

It localises to the cytoplasm. It carries out the reaction (2R,3S)-3-isopropylmalate + NAD(+) = 4-methyl-2-oxopentanoate + CO2 + NADH. It participates in amino-acid biosynthesis; L-leucine biosynthesis; L-leucine from 3-methyl-2-oxobutanoate: step 3/4. Functionally, catalyzes the oxidation of 3-carboxy-2-hydroxy-4-methylpentanoate (3-isopropylmalate) to 3-carboxy-4-methyl-2-oxopentanoate. The product decarboxylates to 4-methyl-2 oxopentanoate. This Bordetella pertussis (strain Tohama I / ATCC BAA-589 / NCTC 13251) protein is 3-isopropylmalate dehydrogenase.